A 190-amino-acid polypeptide reads, in one-letter code: Large ribosomal subunit protein uL5 (190 aa).

It belongs to the universal ribosomal protein uL5 family. In terms of assembly, part of the 50S ribosomal subunit; part of the 5S rRNA/L5/L18/L25 subcomplex. Contacts the 5S rRNA and the P site tRNA. Forms a bridge to the 30S subunit in the 70S ribosome.

In terms of biological role, this is one of the proteins that bind and probably mediate the attachment of the 5S RNA into the large ribosomal subunit, where it forms part of the central protuberance. In the 70S ribosome it contacts protein S13 of the 30S subunit (bridge B1b), connecting the 2 subunits; this bridge is implicated in subunit movement. Contacts the P site tRNA; the 5S rRNA and some of its associated proteins might help stabilize positioning of ribosome-bound tRNAs. In Corynebacterium efficiens (strain DSM 44549 / YS-314 / AJ 12310 / JCM 11189 / NBRC 100395), this protein is Large ribosomal subunit protein uL5.